An 84-amino-acid polypeptide reads, in one-letter code: Small ribosomal subunit protein uS17 (84 aa).

This sequence belongs to the universal ribosomal protein uS17 family. As to quaternary structure, part of the 30S ribosomal subunit.

Functionally, one of the primary rRNA binding proteins, it binds specifically to the 5'-end of 16S ribosomal RNA. This chain is Small ribosomal subunit protein uS17, found in Treponema pallidum (strain Nichols).